We begin with the raw amino-acid sequence, 197 residues long: ATP-dependent Clp protease proteolytic subunit (197 aa).

Serine 98 acts as the Nucleophile in catalysis. Histidine 123 is an active-site residue.

The protein belongs to the peptidase S14 family. Fourteen ClpP subunits assemble into 2 heptameric rings which stack back to back to give a disk-like structure with a central cavity, resembling the structure of eukaryotic proteasomes.

The protein localises to the cytoplasm. The catalysed reaction is Hydrolysis of proteins to small peptides in the presence of ATP and magnesium. alpha-casein is the usual test substrate. In the absence of ATP, only oligopeptides shorter than five residues are hydrolyzed (such as succinyl-Leu-Tyr-|-NHMec, and Leu-Tyr-Leu-|-Tyr-Trp, in which cleavage of the -Tyr-|-Leu- and -Tyr-|-Trp bonds also occurs).. In terms of biological role, cleaves peptides in various proteins in a process that requires ATP hydrolysis. Has a chymotrypsin-like activity. Plays a major role in the degradation of misfolded proteins. This chain is ATP-dependent Clp protease proteolytic subunit, found in Natranaerobius thermophilus (strain ATCC BAA-1301 / DSM 18059 / JW/NM-WN-LF).